The sequence spans 871 residues: Phosphoinositide 3-kinase regulatory subunit 5 (871 aa).

The residue at position 1 (methionine 1) is an N-acetylmethionine. Residues 25-101 (SLGRRSAPWS…TPHFPPDSDL (77 aa)) form a heterodimerization region. The segment at 381 to 413 (MDSGYVEDSEENSEWPQKPGSQKRQGHRRPGQK) is disordered. Phosphoserine occurs at positions 451 and 500. An interaction with beta-gamma G protein dimers region spans residues 646 to 746 (PILADMLLYY…WSNLEKVCTS (101 aa)).

Heterodimer of a catalytic subunit (PIK3CG/p120) and a regulatory (PIK3R5a/p101) subunit. Interacts with beta-gamma G protein dimers.

Its subcellular location is the nucleus. The protein localises to the cytoplasm. It is found in the cell membrane. With respect to regulation, greatly activated by G gamma proteins. Its function is as follows. Regulatory subunit of the PI3K gamma complex. Required for recruitment of the catalytic subunit to the plasma membrane via interaction with beta-gamma G protein dimers. Required for G protein-mediated activation of PIK3CG. The polypeptide is Phosphoinositide 3-kinase regulatory subunit 5 (Pik3r5) (Mus musculus (Mouse)).